A 274-amino-acid chain; its full sequence is Exosome complex component Rrp42 (274 aa).

This sequence belongs to the RNase PH family. Rrp42 subfamily. Component of the archaeal exosome complex. Forms a hexameric ring-like arrangement composed of 3 Rrp41-Rrp42 heterodimers. The hexameric ring associates with a trimer of Rrp4 and/or Csl4 subunits.

The protein localises to the cytoplasm. Functionally, non-catalytic component of the exosome, which is a complex involved in RNA degradation. Contributes to the structuring of the Rrp41 active site. The protein is Exosome complex component Rrp42 of Pyrococcus horikoshii (strain ATCC 700860 / DSM 12428 / JCM 9974 / NBRC 100139 / OT-3).